Here is a 228-residue protein sequence, read N- to C-terminus: LOB domain-containing protein 30 (228 aa).

Positions 16–118 (GPCGACKFLR…TELSYLQAHL (103 aa)) constitute an LOB domain. The tract at residues 188-228 (SNMGGGGELQALAREFIHGGQMPAQPSPGTSGSASSVIKRE) is disordered. Residues 214 to 228 (SPGTSGSASSVIKRE) show a composition bias toward polar residues.

The protein belongs to the LOB domain-containing protein family. As to expression, expressed in roots, stems, leaves and flowers. Expressed in vascular tissues of hypocotyls, leaves, roots, developing floral organs and siliques.

Its function is as follows. Involved in the positive regulation of tracheary element (TE) differentiation. Involved in a positive feedback loop that maintains or promotes NAC030/VND7 expression that regulates TE differentiation-related genes. This chain is LOB domain-containing protein 30 (LBD30), found in Arabidopsis thaliana (Mouse-ear cress).